The primary structure comprises 185 residues: Tetratricopeptide repeat protein 36 homolog (185 aa).

TPR repeat units lie at residues 53–86 (SREL…AQRA), 88–119 (VLNN…ASDQ), and 125–158 (CHAH…GSKF).

Belongs to the TTC36 family.

This chain is Tetratricopeptide repeat protein 36 homolog, found in Drosophila pseudoobscura pseudoobscura (Fruit fly).